The chain runs to 128 residues: Putative histidinol dehydrogenase (128 aa).

Residues 21 to 84 (QRPDIAPRHH…EGQEKASGRR (64 aa)) form a disordered region. Basic and acidic residues-rich tracts occupy residues 34–50 (HRAE…RRTA) and 72–81 (QGREGQEKAS).

This sequence belongs to the histidinol dehydrogenase family.

The catalysed reaction is L-histidinol + 2 NAD(+) + H2O = L-histidine + 2 NADH + 3 H(+). Its pathway is amino-acid biosynthesis; L-histidine biosynthesis; L-histidine from 5-phospho-alpha-D-ribose 1-diphosphate: step 9/9. Catalyzes the sequential NAD-dependent oxidations of L-histidinol to L-histidinaldehyde and then to L-histidine. The polypeptide is Putative histidinol dehydrogenase (hisD) (Azospirillum brasilense).